The primary structure comprises 516 residues: Bifunctional purine biosynthesis protein PurH (516 aa).

An MGS-like domain is found at 1-149 (MSERQPIRRA…KNHANVAVLT (149 aa)).

The protein belongs to the PurH family.

The enzyme catalyses (6R)-10-formyltetrahydrofolate + 5-amino-1-(5-phospho-beta-D-ribosyl)imidazole-4-carboxamide = 5-formamido-1-(5-phospho-D-ribosyl)imidazole-4-carboxamide + (6S)-5,6,7,8-tetrahydrofolate. The catalysed reaction is IMP + H2O = 5-formamido-1-(5-phospho-D-ribosyl)imidazole-4-carboxamide. Its pathway is purine metabolism; IMP biosynthesis via de novo pathway; 5-formamido-1-(5-phospho-D-ribosyl)imidazole-4-carboxamide from 5-amino-1-(5-phospho-D-ribosyl)imidazole-4-carboxamide (10-formyl THF route): step 1/1. The protein operates within purine metabolism; IMP biosynthesis via de novo pathway; IMP from 5-formamido-1-(5-phospho-D-ribosyl)imidazole-4-carboxamide: step 1/1. The chain is Bifunctional purine biosynthesis protein PurH from Cutibacterium acnes (strain DSM 16379 / KPA171202) (Propionibacterium acnes).